Consider the following 232-residue polypeptide: tRNA (guanine-N(1)-)-methyltransferase (232 aa).

S-adenosyl-L-methionine-binding positions include Gly-111 and 131 to 136 (IGDYIL).

The protein belongs to the RNA methyltransferase TrmD family. As to quaternary structure, homodimer.

It is found in the cytoplasm. It carries out the reaction guanosine(37) in tRNA + S-adenosyl-L-methionine = N(1)-methylguanosine(37) in tRNA + S-adenosyl-L-homocysteine + H(+). Functionally, specifically methylates guanosine-37 in various tRNAs. The polypeptide is tRNA (guanine-N(1)-)-methyltransferase (Bartonella henselae (strain ATCC 49882 / DSM 28221 / CCUG 30454 / Houston 1) (Rochalimaea henselae)).